We begin with the raw amino-acid sequence, 283 residues long: DegV domain-containing protein BH3627 (283 aa).

In terms of domain architecture, DegV spans 4–281; sequence IAIVTDSTAY…EGSIGLSWYI (278 aa). 2 residues coordinate hexadecanoate: T62 and S95.

Its function is as follows. May bind long-chain fatty acids, such as palmitate, and may play a role in lipid transport or fatty acid metabolism. The protein is DegV domain-containing protein BH3627 of Halalkalibacterium halodurans (strain ATCC BAA-125 / DSM 18197 / FERM 7344 / JCM 9153 / C-125) (Bacillus halodurans).